The primary structure comprises 437 residues: Interactor protein for cytohesin exchange factors 1 (437 aa).

Residues 41–140 form the PH domain; sequence HADCQGWLYK…WLNKLGSAVI (100 aa). Disordered regions lie at residues 143–225 and 273–307; these read ESTT…PDTV and LSSD…ETKV. Acidic residues predominate over residues 151 to 162; it reads CYSESEQEDPEI. Residues 172-200 show a composition bias toward low complexity; it reads ASQTQSLTAQQASSSSPSLSGTSYSFSSL. The span at 201–214 shows a compositional bias: polar residues; it reads ENTVKTPSSFPSSL. Low complexity predominate over residues 273–283; the sequence is LSSDDTSSLSS. CRAC domain stretches follow at residues 315-320 and 339-348; these read KLYKSL and LRKSFVKRCK. Residues 389 to 437 form a required for interaction with CYTH2 region; it reads KYREWKVMNTLLIQDIYQQQRASPAPDDTDDTPQELKKSPSSPSVENSI. The tract at residues 406-437 is disordered; sequence QQQRASPAPDDTDDTPQELKKSPSSPSVENSI. Serine 411 carries the phosphoserine modification. Residues 427 to 437 are compositionally biased toward polar residues; it reads SPSSPSVENSI.

Interacts with guanine-nucleotide exchange factors PSCD1, PSCD2, PSCD3 and PSCD4. Interacts (via C-terminus) with cytohesin-2 CYTH2.

It is found in the cytoplasm. Its subcellular location is the cell membrane. Its function is as follows. Enhances the promotion of guanine-nucleotide exchange by PSCD2 on ARF6 in a concentration-dependent manner. In Homo sapiens (Human), this protein is Interactor protein for cytohesin exchange factors 1 (IPCEF1).